Consider the following 1514-residue polypeptide: Mitogen-activated protein kinase-binding protein 1 (1514 aa).

Alanine 2 carries the post-translational modification N-acetylalanine. WD repeat units follow at residues 88–129 (SSRK…QVAE), 132–173 (EHKY…VVAS), 175–213 (KVSS…TSKV), 276–315 (DSFT…FLST), 342–381 (ARYP…KVGK), 387–436 (YHSS…VHGS), 477–516 (DPRV…EMLK), 519–561 (AHDS…SLQQ), 565–606 (EHSS…DGVQ), 614–653 (VRKT…QKKL), 659–698 (GEDG…CVAT), and 701–740 (GHSE…TISM). Disordered regions lie at residues 748 to 804 (RQRQ…PALP), 880 to 925 (PSLQ…SQPC), 951 to 1256 (EDGI…SSMA), and 1299 to 1336 (DIPK…GLGK). Acidic residues predominate over residues 789-800 (KEGEDEGTEEEL). Composition is skewed to polar residues over residues 905–925 (LETS…SQPC) and 961–971 (DNPTMDTSEFQ). A compositionally biased stretch (low complexity) spans 996 to 1011 (DSACSVDYSSSCLSSP). The span at 1032–1048 (DLEEPAEGDEEEEEEEG) shows a compositional bias: acidic residues. The span at 1113–1126 (PSPSSSSLALMSRP) shows a compositional bias: low complexity. 2 stretches are compositionally biased toward polar residues: residues 1188-1200 (SPFS…QSVH) and 1245-1256 (HSYQNPTTSSMA). Serine 1198 bears the Phosphoserine mark.

In terms of assembly, can form homodimers (via C-terminus). Interacts (via C-terminus) with WDR62 (via C-terminus). Interacts with MAPK9. Interacts (via N-terminus) with NOD2; the interaction is enhanced in presence of muramyl dipeptide (MDP). Interacts with MAPK10. In terms of tissue distribution, expressed in intestinal mucosa, where it is detected in epithelial cells, endothelial cells, smooth muscle cells and immune cells, such as lymphocytes. Expressed in kidney.

The protein resides in the cytoplasm. Its subcellular location is the nucleus. The protein localises to the cytoskeleton. It is found in the spindle pole. Negative regulator of NOD2 function. It down-regulates NOD2-induced processes such as activation of NF-kappa-B signaling, IL8 secretion and antibacterial response. Involved in JNK signaling pathway. The sequence is that of Mitogen-activated protein kinase-binding protein 1 (MAPKBP1) from Homo sapiens (Human).